The primary structure comprises 192 residues: MQRVSRLKRELQLLNKEPPPGVICWQNESNMDDLRAQIIGGSGSPYEGGIFNLEIIVPERYPFEPPKIRFLTPIYHPNIDSAGRICLDILKLPPKGAWRPALNISTVLTSIQLLMSEPNPDDPLMADISSEFKYNRAVFFSNAKKWTEKHALPAPQGSDKESQEKSGSSEGTSHKRKSAEIAEESKKPCREP.

The UBC core domain maps to 2–152 (QRVSRLKREL…AKKWTEKHAL (151 aa)). Cys-86 (glycyl thioester intermediate) is an active-site residue. The disordered stretch occupies residues 150-192 (HALPAPQGSDKESQEKSGSSEGTSHKRKSAEIAEESKKPCREP). Positions 178–192 (SAEIAEESKKPCREP) are enriched in basic and acidic residues.

The protein belongs to the ubiquitin-conjugating enzyme family.

The protein resides in the nucleus. The enzyme catalyses S-ubiquitinyl-[E1 ubiquitin-activating enzyme]-L-cysteine + [E2 ubiquitin-conjugating enzyme]-L-cysteine = [E1 ubiquitin-activating enzyme]-L-cysteine + S-ubiquitinyl-[E2 ubiquitin-conjugating enzyme]-L-cysteine.. The protein operates within protein modification; protein ubiquitination. In terms of biological role, accepts ubiquitin from the E1 complex and catalyzes its covalent attachment to other proteins. Catalyzes monoubiquitination. Involved in DNA repair. The sequence is that of Ubiquitin-conjugating enzyme E2 T (ube2t) from Xenopus laevis (African clawed frog).